Consider the following 470-residue polypeptide: Glycine--tRNA ligase (470 aa).

R94 and E183 together coordinate substrate. Residues R215–E217, F225–F230, E298–I299, and G342–R345 each bind ATP. Residue F230–E234 coordinates substrate. E338–G342 contributes to the substrate binding site.

Belongs to the class-II aminoacyl-tRNA synthetase family. Homodimer.

The protein resides in the cytoplasm. It carries out the reaction tRNA(Gly) + glycine + ATP = glycyl-tRNA(Gly) + AMP + diphosphate. In terms of biological role, catalyzes the attachment of glycine to tRNA(Gly). This is Glycine--tRNA ligase from Chlorobaculum tepidum (strain ATCC 49652 / DSM 12025 / NBRC 103806 / TLS) (Chlorobium tepidum).